Reading from the N-terminus, the 181-residue chain is Achaete-scute homolog 3 (181 aa).

The tract at residues 93 to 106 is basic motif; it reads AFTRKRNERERQRV. One can recognise a bHLH domain in the interval 93–145; sequence AFTRKRNERERQRVKCVNEGYAQLRHHLPEEYLEKRLSKVETLRAAIKYINYL. The interval 107-145 is helix-loop-helix motif; it reads KCVNEGYAQLRHHLPEEYLEKRLSKVETLRAAIKYINYL.

In terms of assembly, efficient DNA binding requires dimerization with another bHLH protein. As to expression, widely expressed in fetal and adult tissues.

Its subcellular location is the nucleus. Its function is as follows. Transcriptional repressor. Inhibits myogenesis. Plays a role in progenitor cells which differentiate into ductal and acinar, but not myoepithelial, cell lineages in the salivary glands. Involved in the functions of the microvillar cells and Bowman's glands and probably, in a non-cell-autonomous manner, in the development or regeneration of a complete olfactory epithelium (OE). The sequence is that of Achaete-scute homolog 3 from Homo sapiens (Human).